A 425-amino-acid chain; its full sequence is Alpha-N-acetylgalactosaminidase (425 aa).

Residues Asn29–Arg30, Glu51, Trp99–His102, Glu119–Val120, and Asn148 contribute to the NAD(+) site. Tyr177 is a substrate binding site. NAD(+) is bound by residues Phe194–Trp198 and Tyr211. Residues Tyr211 to His214 and Tyr293 each bind substrate.

Belongs to the Gfo/Idh/MocA family. Glycosyl hydrolase 109 subfamily. NAD(+) serves as cofactor.

It catalyses the reaction Cleavage of non-reducing alpha-(1-&gt;3)-N-acetylgalactosamine residues from human blood group A and AB mucin glycoproteins, Forssman hapten and blood group A lacto series glycolipids.. Functionally, glycosidase that has specific alpha-N-acetylgalactosaminidase activity. This chain is Alpha-N-acetylgalactosaminidase, found in Bacteroides fragilis (strain ATCC 25285 / DSM 2151 / CCUG 4856 / JCM 11019 / LMG 10263 / NCTC 9343 / Onslow / VPI 2553 / EN-2).